Here is a 225-residue protein sequence, read N- to C-terminus: Cytidylate kinase (225 aa).

Residue 11–19 participates in ATP binding; sequence GPAAAGKST.

Belongs to the cytidylate kinase family. Type 1 subfamily.

Its subcellular location is the cytoplasm. The enzyme catalyses CMP + ATP = CDP + ADP. It catalyses the reaction dCMP + ATP = dCDP + ADP. The chain is Cytidylate kinase from Bacillus cereus (strain AH187).